The chain runs to 169 residues: MLTLPKYLRSELKKPLGQLYKSIDIIEEKLHQQLSEDKLIISIGDATTKNLIKLNIQPQICIVDNKIEREPVEHKLTHTDNLVHVNNPAGCITDELVKICIDSINTATSNNPVIIEVKGEEDLAVLPCILNAPKDTFILYGQPKEGVVLVCVNEAFNKAKHFYKQLNKE.

Residues aspartate 45, aspartate 64, lysine 66, and glutamate 121 each coordinate GTP.

This sequence belongs to the GTP-dependent DPCK family.

It carries out the reaction 3'-dephospho-CoA + GTP = GDP + CoA + H(+). It participates in cofactor biosynthesis; coenzyme A biosynthesis. Functionally, catalyzes the GTP-dependent phosphorylation of the 3'-hydroxyl group of dephosphocoenzyme A to form coenzyme A (CoA). The protein is GTP-dependent dephospho-CoA kinase of Methanosphaera stadtmanae (strain ATCC 43021 / DSM 3091 / JCM 11832 / MCB-3).